The following is a 439-amino-acid chain: Omega-aminotransferase (439 aa).

112–113 (GS) is a binding site for pyridoxal 5'-phosphate. At lysine 281 the chain carries N6-(pyridoxal phosphate)lysine. Pyridoxal 5'-phosphate is bound at residue threonine 318.

The protein belongs to the class-III pyridoxal-phosphate-dependent aminotransferase family. Homotetramer. The cofactor is pyridoxal 5'-phosphate.

The enzyme catalyses 3-oxopropanoate + L-alanine = beta-alanine + pyruvate. It carries out the reaction 3-aminobutanoate + pyruvate = acetoacetate + L-alanine. The catalysed reaction is benzylamine + pyruvate = benzaldehyde + L-alanine. It catalyses the reaction (S)-1-phenylethylamine + pyruvate = acetophenone + L-alanine. The enzyme catalyses 2-phenylethylamine + pyruvate = 2-phenylacetaldehyde + L-alanine. It carries out the reaction 1-phenylpropylamine + pyruvate = 1-phenylpropan-1-one + L-alanine. The catalysed reaction is 3-phenylpropylamine + pyruvate = 3-phenylpropanal + L-alanine. Its function is as follows. Aminotransferase that can use beta-amino acids, aliphatic amines, or aromatic amines as amino donors, and pyruvate as amino acceptor. Shows high activity for short-chain beta-amino acids, with the highest activity for 3-aminobutanoate and beta-alanine in vitro. Displays higher activity toward aromatic amines than aliphatic amines. May be involved in beta-alanine biosynthesis and/or degradation. The sequence is that of Omega-aminotransferase from Caulobacter vibrioides (strain ATCC 19089 / CIP 103742 / CB 15) (Caulobacter crescentus).